Here is a 65-residue protein sequence, read N- to C-terminus: Alpha-conotoxin BnIA (65 aa).

The first 21 residues, 1-21 (MGMRMMFTMFLLVVLATTVVS), serve as a signal peptide directing secretion. Positions 22-48 (FASDRASDGRNAAAKDKASDLVALTVK) are excised as a propeptide. Cystine bridges form between cysteine 50–cysteine 56 and cysteine 51–cysteine 64. A ser-Xaa-Pro motif, crucial for potent interaction with nAChR region spans residues 52 to 54 (SHP). Position 64 is a cysteine amide (cysteine 64).

It belongs to the conotoxin A superfamily. As to expression, expressed by the venom duct.

It localises to the secreted. Alpha-conotoxins act on postsynaptic membranes, they bind to the nicotinic acetylcholine receptors (nAChR) and thus inhibit them. This toxin inhibits acetylcholine-evoked currents reversibly in oocytes expressing the human alpha-7/CHRNA7 nAChR, and blocks nerve-evoked skeletal muscle contractions in isolated mouse neuromuscular preparations, but with a very low affinity. The chain is Alpha-conotoxin BnIA from Conus bandanus (Banded marble cone).